The following is a 333-amino-acid chain: Cytosolic Fe-S cluster assembly factor NBP35 (333 aa).

[4Fe-4S] cluster is bound by residues Cys-32, Cys-46, Cys-49, and Cys-55. ATP is bound at residue 85–92 (GKGGVGKS). Positions 258 and 261 each coordinate [4Fe-4S] cluster.

It belongs to the Mrp/NBP35 ATP-binding proteins family. NUBP1/NBP35 subfamily. In terms of assembly, heterotetramer of 2 NBP35 and 2 CFD1 chains. The cofactor is [4Fe-4S] cluster.

The protein localises to the cytoplasm. The protein resides in the nucleus. In terms of biological role, component of the cytosolic iron-sulfur (Fe/S) protein assembly (CIA) machinery. Required for maturation of extramitochondrial Fe-S proteins. The NBP35-CFD1 heterotetramer forms a Fe-S scaffold complex, mediating the de novo assembly of an Fe-S cluster and its transfer to target apoproteins. Required for biogenesis and export of both ribosomal subunits, which may reflect a role in assembly of the Fe/S clusters in RLI1, a protein which performs rRNA processing and ribosome export. The sequence is that of Cytosolic Fe-S cluster assembly factor NBP35 from Eremothecium gossypii (strain ATCC 10895 / CBS 109.51 / FGSC 9923 / NRRL Y-1056) (Yeast).